Consider the following 380-residue polypeptide: Phospho-N-acetylmuramoyl-pentapeptide-transferase (380 aa).

11 helical membrane passes run 26–46 (IVAA…IFIE), 75–95 (MGGA…ADLA), 98–118 (FVWA…TDDW), 135–155 (LVLQ…DWRF), 161–181 (FPWV…FVPS), 183–203 (LFNP…VIAT), 222–242 (VVSA…IAGF), 259–279 (LGVF…YNTY), 283–303 (VFMG…MAVL), 311–331 (AILH…VWSF), and 357–377 (KIIV…LLSI).

It belongs to the glycosyltransferase 4 family. MraY subfamily. The cofactor is Mg(2+).

Its subcellular location is the cell inner membrane. It carries out the reaction UDP-N-acetyl-alpha-D-muramoyl-L-alanyl-gamma-D-glutamyl-meso-2,6-diaminopimeloyl-D-alanyl-D-alanine + di-trans,octa-cis-undecaprenyl phosphate = di-trans,octa-cis-undecaprenyl diphospho-N-acetyl-alpha-D-muramoyl-L-alanyl-D-glutamyl-meso-2,6-diaminopimeloyl-D-alanyl-D-alanine + UMP. It functions in the pathway cell wall biogenesis; peptidoglycan biosynthesis. Catalyzes the initial step of the lipid cycle reactions in the biosynthesis of the cell wall peptidoglycan: transfers peptidoglycan precursor phospho-MurNAc-pentapeptide from UDP-MurNAc-pentapeptide onto the lipid carrier undecaprenyl phosphate, yielding undecaprenyl-pyrophosphoryl-MurNAc-pentapeptide, known as lipid I. This chain is Phospho-N-acetylmuramoyl-pentapeptide-transferase, found in Anaeromyxobacter dehalogenans (strain 2CP-1 / ATCC BAA-258).